Here is a 401-residue protein sequence, read N- to C-terminus: Propionate kinase (401 aa).

Residues Asn11 and Lys18 each contribute to the ATP site. Asn11 provides a ligand contact to Mg(2+). Arg86 is a substrate binding site. Asp143 serves as the catalytic Proton donor/acceptor. Residues His175, 203–207, 278–280, and 326–330 each bind ATP; these read HLGNG, DLR, and GIGEN.

It belongs to the acetokinase family. TdcD subfamily. In terms of assembly, homodimer. Mg(2+) serves as cofactor.

It catalyses the reaction propanoate + ATP = propanoyl phosphate + ADP. It participates in amino-acid degradation; L-threonine degradation via propanoate pathway; propanoate from L-threonine: step 4/4. Functionally, catalyzes the conversion of propionyl phosphate and ADP to propionate and ATP. This is Propionate kinase from Klebsiella pneumoniae (strain 342).